The following is a 427-amino-acid chain: Galactose-3-O-sulfotransferase 3 (427 aa).

Residues 1–19 lie on the Cytoplasmic side of the membrane; sequence MPPIFQRLQQATKMSRRKI. Residues 20–40 traverse the membrane as a helical; Signal-anchor for type II membrane protein segment; it reads LLLVLGCSTLSLLIHQGAQLS. The Lumenal segment spans residues 41–427; the sequence is WYPKLFPLSC…RPIRALRPGH (387 aa). Residues Asn90, Asn109, Asn176, and Asn301 are each glycosylated (N-linked (GlcNAc...) asparagine). Residues 404–427 are disordered; it reads MRLRPEPVLDNPPPRPIRALRPGH.

The protein belongs to the galactose-3-O-sulfotransferase family. Requires Mg(2+) as cofactor.

The protein localises to the golgi apparatus. It localises to the golgi stack membrane. It participates in protein modification; carbohydrate sulfation. In terms of biological role, transfers a sulfate to position 3 of non-reducing beta-galactosyl residues in N-glycans and core2-branched O-glycans. Has high activity towards Gal-beta-1,4-GlcNAc, Gal-beta-1,4(Fuc-alpha-1,3)GlcNAc and lower activity towards Gal-beta-1,3(Fuc-alpha-1,4)GlcNAc. The chain is Galactose-3-O-sulfotransferase 3 (GAL3ST3) from Bos taurus (Bovine).